Here is a 272-residue protein sequence, read N- to C-terminus: Thymidine phosphorylase (272 aa).

This sequence belongs to the thymidine/pyrimidine-nucleoside phosphorylase family. As to quaternary structure, homodimer.

The catalysed reaction is thymidine + phosphate = 2-deoxy-alpha-D-ribose 1-phosphate + thymine. In terms of biological role, the enzymes which catalyze the reversible phosphorolysis of pyrimidine nucleosides are involved in the degradation of these compounds and in their utilization as carbon and energy sources, or in the rescue of pyrimidine bases for nucleotide synthesis. The polypeptide is Thymidine phosphorylase (deoA) (Metamycoplasma hominis (Mycoplasma hominis)).